The following is a 140-amino-acid chain: Secreted RxLR effector protein 37 (140 aa).

The N-terminal stretch at 1–22 (MTYRLPFVAVILFVTAKHVVLA) is a signal peptide. The short motif at 57–76 (RFLRQLEKKPGVNDKRDEER) is the RxLR-dEER element.

It belongs to the RxLR effector family.

The protein resides in the secreted. It localises to the host nucleus. Its subcellular location is the host cytoplasm. Its function is as follows. Secreted effector that completely suppresses the host cell death induced by cell death-inducing proteins. This chain is Secreted RxLR effector protein 37, found in Plasmopara viticola (Downy mildew of grapevine).